The chain runs to 91 residues: DNA-directed RNA polymerase subunit omega (91 aa).

This sequence belongs to the RNA polymerase subunit omega family. As to quaternary structure, the RNAP catalytic core consists of 2 alpha, 1 beta, 1 beta' and 1 omega subunit. When a sigma factor is associated with the core the holoenzyme is formed, which can initiate transcription.

The enzyme catalyses RNA(n) + a ribonucleoside 5'-triphosphate = RNA(n+1) + diphosphate. In terms of biological role, promotes RNA polymerase assembly. Latches the N- and C-terminal regions of the beta' subunit thereby facilitating its interaction with the beta and alpha subunits. In Sodalis glossinidius (strain morsitans), this protein is DNA-directed RNA polymerase subunit omega.